We begin with the raw amino-acid sequence, 543 residues long: Limonene hydroxylase (543 aa).

The Sigma-54 factor interaction domain occupies valine 232–leucine 464. ATP is bound by residues glycine 260–glutamate 267 and alanine 324–glutamate 333.

The catalysed reaction is (4S)-limonene + reduced [NADPH--hemoprotein reductase] + O2 = (1S,5R)-carveol + oxidized [NADPH--hemoprotein reductase] + H2O + H(+). The enzyme catalyses (4S)-limonene + reduced [NADPH--hemoprotein reductase] + O2 = (4S)-perillyl alcohol + oxidized [NADPH--hemoprotein reductase] + H2O + H(+). It catalyses the reaction perillyl alcohol + NAD(+) = perillyl aldehyde + NADH + H(+). It carries out the reaction (1S,5R)-carveol + NADP(+) = (R)-carvone + NADPH + H(+). Its function is as follows. Involved in limonene hydroxylation to a mixture of carveol and perillyl alcohol as well as in dehydrogenation of these products to carvone and perillyl aldehyde. Aromatic alcohols containing an isopropyl or isopropenyl group at ring position 4 also served as substrates for the dehydrogenase activity. The chain is Limonene hydroxylase from Geobacillus stearothermophilus (Bacillus stearothermophilus).